Here is an 81-residue protein sequence, read N- to C-terminus: Large ribosomal subunit protein bL27 (81 aa).

Over residues 1–11 (MATSKSGGSSK) the composition is skewed to polar residues. Residues 1–24 (MATSKSGGSSKNGRDSISKRLGVK) form a disordered region.

Belongs to the bacterial ribosomal protein bL27 family.

The protein is Large ribosomal subunit protein bL27 of Borrelia duttonii (strain Ly).